The chain runs to 370 residues: Early nodulin-like protein 1 (370 aa).

Residues 1–27 (MSAIMKSLCFSFLILASFATFFSVADA) form the signal peptide. Residues 28 to 129 (WRFNVGGNGA…GQKLIVVVLA (102 aa)) form the Phytocyanin domain. Asn-58 is a glycosylation site (N-linked (GlcNAc...) asparagine). Cys-83 and Cys-117 are joined by a disulfide. Over residues 135-175 (SAPAHSPVPSVSPTQPPKSHSPVSPVAPASAPSKSQPPRSS) the composition is skewed to low complexity. The segment at 135–347 (SAPAHSPVPS…PAPSPRTNSA (213 aa)) is disordered. Over residues 176–194 (VSPAQPPKSSSPISHTPAL) the composition is skewed to polar residues. Composition is skewed to low complexity over residues 195–205 (SPSHATSHSPA) and 215–290 (SPVS…QSPA). Residues 291 to 305 (TPSPMTPQSPSPVSS) are compositionally biased toward pro residues. Residues 306 to 318 (PSPDQSAAPSDQS) are compositionally biased toward low complexity. Positions 319-334 (TPLAPSPSETTPTADN) are enriched in polar residues. The N-linked (GlcNAc...) asparagine glycan is linked to Asn-334. Asn-345 carries the GPI-anchor amidated asparagine lipid modification. Residues 346 to 370 (SASGLAVTSVMSTLFSATFTFLMFA) constitute a propeptide, removed in mature form.

This sequence belongs to the early nodulin-like (ENODL) family. As to expression, mostly expressed in stems, leaves and flowers, and, to a lower extent, in seedlings, roots and seeds.

Its subcellular location is the cell membrane. Functionally, may act as a carbohydrate transporter. The sequence is that of Early nodulin-like protein 1 from Arabidopsis thaliana (Mouse-ear cress).